The following is a 259-amino-acid chain: Pimeloyl-[acyl-carrier protein] methyl ester esterase (259 aa).

Substrate-binding positions include tryptophan 18, 78 to 79, and 139 to 143; these read SL and FLALD. Residue serine 78 is the Nucleophile of the active site. Catalysis depends on residues aspartate 203 and histidine 231. Residue histidine 231 coordinates substrate.

Belongs to the AB hydrolase superfamily. Carboxylesterase BioH family. Monomer.

The protein resides in the cytoplasm. The catalysed reaction is 6-carboxyhexanoyl-[ACP] methyl ester + H2O = 6-carboxyhexanoyl-[ACP] + methanol + H(+). It functions in the pathway cofactor biosynthesis; biotin biosynthesis. In terms of biological role, the physiological role of BioH is to remove the methyl group introduced by BioC when the pimeloyl moiety is complete. It allows to synthesize pimeloyl-ACP via the fatty acid synthetic pathway through the hydrolysis of the ester bonds of pimeloyl-ACP esters. The sequence is that of Pimeloyl-[acyl-carrier protein] methyl ester esterase from Stenotrophomonas maltophilia (strain R551-3).